We begin with the raw amino-acid sequence, 168 residues long: tRNA-splicing endonuclease subunit Sen15 (168 aa).

Residues 1 to 32 form a disordered region; that stretch reads MEERSDSEPTPGCSGPGPAPVRDGGGAHTWAP. Phosphoserine occurs at positions 7 and 165.

The protein belongs to the SEN15 family. Homodimer. tRNA splicing endonuclease is a heterotetramer composed of TSEN2, TSEN15, TSEN34/LENG5 and TSEN54. tRNA splicing endonuclease complex also contains proteins of the pre-mRNA 3' end processing machinery such as CLP1, CPSF1, CPSF4 and CSTF2.

The protein resides in the nucleus. The protein localises to the nucleolus. Its function is as follows. Non-catalytic subunit of the tRNA-splicing endonuclease complex, a complex responsible for identification and cleavage of the splice sites in pre-tRNA. It cleaves pre-tRNA at the 5' and 3' splice sites to release the intron. The products are an intron and two tRNA half-molecules bearing 2',3' cyclic phosphate and 5'-OH termini. There are no conserved sequences at the splice sites, but the intron is invariably located at the same site in the gene, placing the splice sites an invariant distance from the constant structural features of the tRNA body. The tRNA splicing endonuclease is also involved in mRNA processing via its association with pre-mRNA 3'-end processing factors, establishing a link between pre-tRNA splicing and pre-mRNA 3'-end formation, suggesting that the endonuclease subunits function in multiple RNA-processing events. This chain is tRNA-splicing endonuclease subunit Sen15 (Tsen15), found in Mus musculus (Mouse).